The primary structure comprises 370 residues: Putative agmatine deiminase (370 aa).

Over residues 1 to 19 (MTNMNVDATQLTTKPSQDG) the composition is skewed to polar residues. The tract at residues 1-20 (MTNMNVDATQLTTKPSQDGF) is disordered. Cys-361 acts as the Amidino-cysteine intermediate in catalysis.

Belongs to the agmatine deiminase family.

It carries out the reaction agmatine + H2O = N-carbamoylputrescine + NH4(+). The protein is Putative agmatine deiminase of Shewanella frigidimarina (strain NCIMB 400).